We begin with the raw amino-acid sequence, 367 residues long: Ferrochelatase (367 aa).

Fe cation is bound by residues histidine 213 and glutamate 294.

Belongs to the ferrochelatase family.

It is found in the cytoplasm. It catalyses the reaction heme b + 2 H(+) = protoporphyrin IX + Fe(2+). It participates in porphyrin-containing compound metabolism; protoheme biosynthesis; protoheme from protoporphyrin-IX: step 1/1. In terms of biological role, catalyzes the ferrous insertion into protoporphyrin IX. This chain is Ferrochelatase, found in Polaromonas sp. (strain JS666 / ATCC BAA-500).